A 320-amino-acid polypeptide reads, in one-letter code: Undecaprenyl-diphosphatase (320 aa).

Transmembrane regions (helical) follow at residues 9–29 (FVLI…LEVF), 82–102 (GVAF…WYFW), 130–150 (LGIV…KTFI), 161–181 (LGAI…GEKL), 191–211 (LTMQ…IPGV), 236–256 (FLLG…DLLA), 265–285 (LPLI…IAGL), and 296–316 (VFIW…SAGI).

This sequence belongs to the UppP family.

The protein resides in the cell inner membrane. The enzyme catalyses di-trans,octa-cis-undecaprenyl diphosphate + H2O = di-trans,octa-cis-undecaprenyl phosphate + phosphate + H(+). In terms of biological role, catalyzes the dephosphorylation of undecaprenyl diphosphate (UPP). Confers resistance to bacitracin. This Nostoc sp. (strain PCC 7120 / SAG 25.82 / UTEX 2576) protein is Undecaprenyl-diphosphatase.